A 215-amino-acid polypeptide reads, in one-letter code: Protein-L-isoaspartate O-methyltransferase (215 aa).

Ser-62 is a catalytic residue.

The protein belongs to the methyltransferase superfamily. L-isoaspartyl/D-aspartyl protein methyltransferase family.

The protein localises to the cytoplasm. It carries out the reaction [protein]-L-isoaspartate + S-adenosyl-L-methionine = [protein]-L-isoaspartate alpha-methyl ester + S-adenosyl-L-homocysteine. In terms of biological role, catalyzes the methyl esterification of L-isoaspartyl residues in peptides and proteins that result from spontaneous decomposition of normal L-aspartyl and L-asparaginyl residues. It plays a role in the repair and/or degradation of damaged proteins. The polypeptide is Protein-L-isoaspartate O-methyltransferase (Bradyrhizobium sp. (strain ORS 278)).